A 382-amino-acid polypeptide reads, in one-letter code: PqqA peptide cyclase (382 aa).

In terms of domain architecture, Radical SAM core spans 8-223 (VKPPLWLLAE…VHRYREKMAA (216 aa)). 3 residues coordinate [4Fe-4S] cluster: C22, C26, and C29.

This sequence belongs to the radical SAM superfamily. PqqE family. Interacts with PqqD. The interaction is necessary for activity of PqqE. It depends on [4Fe-4S] cluster as a cofactor.

It catalyses the reaction [PQQ precursor protein] + S-adenosyl-L-methionine = E-Y cross-linked-[PQQ precursor protein] + 5'-deoxyadenosine + L-methionine + H(+). It functions in the pathway cofactor biosynthesis; pyrroloquinoline quinone biosynthesis. In terms of biological role, catalyzes the cross-linking of a glutamate residue and a tyrosine residue in the PqqA protein as part of the biosynthesis of pyrroloquinoline quinone (PQQ). The sequence is that of PqqA peptide cyclase from Erwinia tasmaniensis (strain DSM 17950 / CFBP 7177 / CIP 109463 / NCPPB 4357 / Et1/99).